Consider the following 129-residue polypeptide: Phosphoribosyl-AMP cyclohydrolase (129 aa).

Asp-77 provides a ligand contact to Mg(2+). Cys-78 is a Zn(2+) binding site. Mg(2+) contacts are provided by Asp-79 and Asp-81. Zn(2+) contacts are provided by Cys-94 and Cys-101.

Belongs to the PRA-CH family. As to quaternary structure, homodimer. Mg(2+) serves as cofactor. Requires Zn(2+) as cofactor.

It is found in the cytoplasm. The catalysed reaction is 1-(5-phospho-beta-D-ribosyl)-5'-AMP + H2O = 1-(5-phospho-beta-D-ribosyl)-5-[(5-phospho-beta-D-ribosylamino)methylideneamino]imidazole-4-carboxamide. The protein operates within amino-acid biosynthesis; L-histidine biosynthesis; L-histidine from 5-phospho-alpha-D-ribose 1-diphosphate: step 3/9. Functionally, catalyzes the hydrolysis of the adenine ring of phosphoribosyl-AMP. The polypeptide is Phosphoribosyl-AMP cyclohydrolase (Pelotomaculum thermopropionicum (strain DSM 13744 / JCM 10971 / SI)).